The sequence spans 178 residues: ATP synthase subunit delta (178 aa).

Belongs to the ATPase delta chain family. F-type ATPases have 2 components, F(1) - the catalytic core - and F(0) - the membrane proton channel. F(1) has five subunits: alpha(3), beta(3), gamma(1), delta(1), epsilon(1). F(0) has three main subunits: a(1), b(2) and c(10-14). The alpha and beta chains form an alternating ring which encloses part of the gamma chain. F(1) is attached to F(0) by a central stalk formed by the gamma and epsilon chains, while a peripheral stalk is formed by the delta and b chains.

The protein resides in the cell inner membrane. Functionally, f(1)F(0) ATP synthase produces ATP from ADP in the presence of a proton or sodium gradient. F-type ATPases consist of two structural domains, F(1) containing the extramembraneous catalytic core and F(0) containing the membrane proton channel, linked together by a central stalk and a peripheral stalk. During catalysis, ATP synthesis in the catalytic domain of F(1) is coupled via a rotary mechanism of the central stalk subunits to proton translocation. This protein is part of the stalk that links CF(0) to CF(1). It either transmits conformational changes from CF(0) to CF(1) or is implicated in proton conduction. The polypeptide is ATP synthase subunit delta (Pseudomonas putida (strain ATCC 700007 / DSM 6899 / JCM 31910 / BCRC 17059 / LMG 24140 / F1)).